A 285-amino-acid chain; its full sequence is Small ribosomal subunit protein uS2 (285 aa).

Residues 229 to 285 (RHNGKSNAAEEPMAEWERELLEQHEEQKSQDAAPAEQSAPAAEAPAETEQKDAPAAE) form a disordered region. Residues 243–257 (EWERELLEQHEEQKS) are compositionally biased toward basic and acidic residues. The span at 260–275 (AAPAEQSAPAAEAPAE) shows a compositional bias: low complexity. Over residues 276-285 (TEQKDAPAAE) the composition is skewed to basic and acidic residues.

Belongs to the universal ribosomal protein uS2 family.

This chain is Small ribosomal subunit protein uS2, found in Kocuria rhizophila (strain ATCC 9341 / DSM 348 / NBRC 103217 / DC2201).